A 149-amino-acid chain; its full sequence is Arginine repressor (149 aa).

The protein belongs to the ArgR family.

The protein localises to the cytoplasm. It functions in the pathway amino-acid biosynthesis; L-arginine biosynthesis [regulation]. Regulates arginine biosynthesis genes. The polypeptide is Arginine repressor (Chlorobaculum tepidum (strain ATCC 49652 / DSM 12025 / NBRC 103806 / TLS) (Chlorobium tepidum)).